Consider the following 466-residue polypeptide: MAKTLYEKLFDAHVVYEAENETPLLYIDRHLVHEVTSPQAFDGLRAHGRPVRQPGKTFATMDHNVSTQTKDINACGEMARIQMQELIKNCKEFGVELYDLNHPYQGIVHVMGPEQGVTLPGMTIVCGDSHTATHGAFGALAFGIGTSEVEHVLATQTLKQGRAKTMKIEVQGKAAPGITAKDIVLAIIGKTGSAGGTGHVVEFCGEAIRDLSMEGRMTLCNMAIEMGAKAGLVAPDETTFNYVKGRLHAPKGKDFDDAVAYWKTLQTDEGATFDTVVTLQAEEMSPQVTWGTNPGQVISVNDNIPDPASFADPVERASAEKALAYMGLKPGIPLTEVAIDKVFIGSCTNSRIEDLRAAAEIAKGRKVAPGVQALVVPGSGPVKAQAEAEGLDKIFIEAGFEWRLPGCSMCLAMNNDRLNPGERCASTSNRNFEGRQGRGGRTHLVSPAMAAAAAVTGHFADIRNIK.

Positions 347, 407, and 410 each coordinate [4Fe-4S] cluster.

This sequence belongs to the aconitase/IPM isomerase family. LeuC type 1 subfamily. As to quaternary structure, heterodimer of LeuC and LeuD. [4Fe-4S] cluster serves as cofactor.

It carries out the reaction (2R,3S)-3-isopropylmalate = (2S)-2-isopropylmalate. It functions in the pathway amino-acid biosynthesis; L-leucine biosynthesis; L-leucine from 3-methyl-2-oxobutanoate: step 2/4. Its function is as follows. Catalyzes the isomerization between 2-isopropylmalate and 3-isopropylmalate, via the formation of 2-isopropylmaleate. This chain is 3-isopropylmalate dehydratase large subunit, found in Escherichia coli O127:H6 (strain E2348/69 / EPEC).